Reading from the N-terminus, the 345-residue chain is MNPTELDSDVFAQDVDNQKARELREMLNTQDFVFAPGMYHALDARLAEMTGHDAAYMSGYSTVLGQFGFPDLEMVTMTEMVENAKRMVEATNLPVIADCDTGYGGIHNVRRAVREYEKAGVAAVHIEDQTTPKRCGHIAGKQIVSREKAKARFEAAVDAKQSEDTVVIARTDAYGSSNGDWDEHVERGRIYADAGVDIVWPEMPNPSREDAVAYAEEIHETHPDLKLAFNYSSSFAWSEEEDPLTFQELGDLGYKYIFITLFGLHSGAHAVYEDFKKLAEQDEEGQFDLEQRYLDHPTESHHELSFVSRYQDIETEFDPEARRRIEESEGFSEEQADPITSNDDD.

58–60 (SGY) contributes to the substrate binding site. Asp-98 contacts Mg(2+). Cys-135 functions as the Proton acceptor in the catalytic mechanism. Substrate contacts are provided by residues 136 to 137 (GH), Arg-170, 230 to 234 (NYSSS), and Thr-260. A disordered region spans residues 318–345 (DPEARRRIEESEGFSEEQADPITSNDDD). The span at 328–345 (SEGFSEEQADPITSNDDD) shows a compositional bias: acidic residues.

Homotetramer or homotrimer. The cofactor is Mg(2+).

It catalyses the reaction D-threo-isocitrate = glyoxylate + succinate. It participates in carbohydrate metabolism; glyoxylate cycle; (S)-malate from isocitrate: step 1/2. Its function is as follows. Involved in the metabolic adaptation in response to environmental changes. Catalyzes the reversible formation of succinate and glyoxylate from isocitrate, a key step of the glyoxylate cycle, which operates as an anaplerotic route for replenishing the tricarboxylic acid cycle during growth on fatty acid substrates. This is Isocitrate lyase (aceA) from Haloferax volcanii (strain ATCC 29605 / DSM 3757 / JCM 8879 / NBRC 14742 / NCIMB 2012 / VKM B-1768 / DS2) (Halobacterium volcanii).